A 220-amino-acid chain; its full sequence is Methylamine utilization ferredoxin-type protein MauM (220 aa).

2 4Fe-4S ferredoxin-type domains span residues 50 to 80 (ALPE…LAEM) and 88 to 120 (TPFF…RDIP). [4Fe-4S] cluster-binding residues include Cys60, Cys63, Cys66, Cys70, Cys98, Cys101, Cys106, Cys110, Cys138, Cys146, Cys149, Cys153, Cys182, Cys185, Cys188, and Cys192. The 4Fe-4S ferredoxin-type 3 domain maps to 173 to 204 (VIPTVHSDKCTGCGTCEKHCVLGQAAIRVLPR).

Its pathway is one-carbon metabolism; methylamine degradation. Its function is as follows. Involved in electron transfer. The protein is Methylamine utilization ferredoxin-type protein MauM (mauM) of Methylorubrum extorquens (strain ATCC 14718 / DSM 1338 / JCM 2805 / NCIMB 9133 / AM1) (Methylobacterium extorquens).